The following is a 455-amino-acid chain: MSLEIVILAAGQGTRMRSALPKVLHPVAGNSMLGHVIHSARQLDPQRIHVVIGHGADAVRERLDADDLNFVLQDKQLGTGHAVAQAVPFITADTVLILYGDVPLIEVETLQRLLKQVGPEQLGLLTVELDDPTGYGRIVRDADGKVVAIVEQKDADEATRAITEGNTGILAVPGKRLGDWTGRLSNNNAQGEYYLTDVIAMAVSDGLIVATEQPHDAMEVQGANDRKQLAELERHYQLRAGRRLMAQGVTLRDPARFDVRGEVIVGRDVLIDINVILEGRVVIEDDVIIGPNCVIKDSTLRKGAVIKANSHLDGAVMGEGSDAGPFARLRPGTVLEARAHVGNFVELKNAHLGQGAKAGHLTYLGDAVIGARTNIGAGTITCNYDGVNKHKTIMGEDVFIGSNNSLVAPVDISSGATTAAGSTITQDVAPAQLAVGRARQKNIDGWKRPEKIKKD.

The pyrophosphorylase stretch occupies residues 1 to 226 (MSLEIVILAA…AMEVQGANDR (226 aa)). Residues 8-11 (LAAG), Lys-22, Gln-73, 78-79 (GT), 99-101 (YGD), Gly-136, Glu-151, Asn-166, and Asn-224 each bind UDP-N-acetyl-alpha-D-glucosamine. Asp-101 contacts Mg(2+). A Mg(2+)-binding site is contributed by Asn-224. Positions 227-247 (KQLAELERHYQLRAGRRLMAQ) are linker. The segment at 248 to 455 (GVTLRDPARF…WKRPEKIKKD (208 aa)) is N-acetyltransferase. UDP-N-acetyl-alpha-D-glucosamine contacts are provided by Arg-330 and Lys-348. The active-site Proton acceptor is His-360. Tyr-363 and Asn-374 together coordinate UDP-N-acetyl-alpha-D-glucosamine. Residues Ala-377, 383 to 384 (NY), Ser-402, Ala-420, and Arg-437 each bind acetyl-CoA.

The protein in the N-terminal section; belongs to the N-acetylglucosamine-1-phosphate uridyltransferase family. In the C-terminal section; belongs to the transferase hexapeptide repeat family. As to quaternary structure, homotrimer. It depends on Mg(2+) as a cofactor.

The protein resides in the cytoplasm. It catalyses the reaction alpha-D-glucosamine 1-phosphate + acetyl-CoA = N-acetyl-alpha-D-glucosamine 1-phosphate + CoA + H(+). It carries out the reaction N-acetyl-alpha-D-glucosamine 1-phosphate + UTP + H(+) = UDP-N-acetyl-alpha-D-glucosamine + diphosphate. It functions in the pathway nucleotide-sugar biosynthesis; UDP-N-acetyl-alpha-D-glucosamine biosynthesis; N-acetyl-alpha-D-glucosamine 1-phosphate from alpha-D-glucosamine 6-phosphate (route II): step 2/2. Its pathway is nucleotide-sugar biosynthesis; UDP-N-acetyl-alpha-D-glucosamine biosynthesis; UDP-N-acetyl-alpha-D-glucosamine from N-acetyl-alpha-D-glucosamine 1-phosphate: step 1/1. It participates in bacterial outer membrane biogenesis; LPS lipid A biosynthesis. Catalyzes the last two sequential reactions in the de novo biosynthetic pathway for UDP-N-acetylglucosamine (UDP-GlcNAc). The C-terminal domain catalyzes the transfer of acetyl group from acetyl coenzyme A to glucosamine-1-phosphate (GlcN-1-P) to produce N-acetylglucosamine-1-phosphate (GlcNAc-1-P), which is converted into UDP-GlcNAc by the transfer of uridine 5-monophosphate (from uridine 5-triphosphate), a reaction catalyzed by the N-terminal domain. This Pseudomonas fluorescens (strain ATCC BAA-477 / NRRL B-23932 / Pf-5) protein is Bifunctional protein GlmU.